The sequence spans 333 residues: CMP-N-acetylneuraminate-beta-galactosamide-alpha-2,3-sialyltransferase 4 (333 aa).

The Cytoplasmic segment spans residues 1–8 (MVSKSRWK). The chain crosses the membrane as a helical; Signal-anchor for type II membrane protein span at residues 9-26 (LLAMLALVLVVMVWYSIS). Over 27–333 (REDRYIELFY…MGAIKNLTSF (307 aa)) the chain is Lumenal. Residues N61, N131, N310, and N329 are each glycosylated (N-linked (GlcNAc...) asparagine). C120 and C273 are disulfide-bonded.

The protein belongs to the glycosyltransferase 29 family. Post-translationally, the soluble form derives from the membrane form by proteolytic processing. As to expression, highly expressed in adult placenta, heart and kidney.

The protein localises to the golgi apparatus. Its subcellular location is the golgi stack membrane. It is found in the secreted. It carries out the reaction a beta-D-galactosyl-(1-&gt;3)-N-acetyl-beta-D-galactosaminyl derivative + CMP-N-acetyl-beta-neuraminate = an N-acetyl-alpha-neuraminyl-(2-&gt;3)-beta-D-galactosyl-(1-&gt;3)-N-acetyl-beta-D-galactosaminyl derivative + CMP + H(+). It catalyses the reaction a beta-D-galactosyl-(1-&gt;3)-N-acetyl-alpha-D-galactosaminyl derivative + CMP-N-acetyl-beta-neuraminate = an N-acetyl-alpha-neuraminyl-(2-&gt;3)-beta-D-galactosyl-(1-&gt;3)-N-acetyl-alpha-D-galactosaminyl derivative + CMP + H(+). The enzyme catalyses a beta-D-galactosyl-(1-&gt;4)-N-acetyl-beta-D-glucosaminyl derivative + CMP-N-acetyl-beta-neuraminate = an N-acetyl-alpha-neuraminyl-(2-&gt;3)-beta-D-galactosyl-(1-&gt;4)-N-acetyl-beta-D-glucosaminyl derivative + CMP + H(+). The catalysed reaction is a ganglioside GM1 (d18:1(4E)) + CMP-N-acetyl-beta-neuraminate = a ganglioside GD1a (d18:1(4E)) + CMP + H(+). It carries out the reaction a ganglioside GA1 (d18:1(4E)) + CMP-N-acetyl-beta-neuraminate = a ganglioside GM1b (d18:1(4E)) + CMP + H(+). It catalyses the reaction a ganglioside GT1c (d18:1(4E)) + CMP-N-acetyl-beta-neuraminate = a ganglioside GQ1c (d18:1(4E)) + CMP + H(+). The enzyme catalyses a neolactoside nLc4Cer + CMP-N-acetyl-beta-neuraminate = a neolactoside IV(3)-alpha-NeuAc-nLc4Cer + CMP + H(+). The catalysed reaction is a neolactoside nLc4Cer(d18:1(4E)) + CMP-N-acetyl-beta-neuraminate = a neolactoside IV(3)-alpha-NeuAc-nLc4Cer(d18:1(4E)) + CMP + H(+). The protein operates within protein modification; protein glycosylation. Its pathway is glycolipid biosynthesis. In terms of biological role, a beta-galactoside alpha2-3 sialyltransferase involved in terminal sialylation of glycoproteins and glycolipids. Catalyzes the transfer of sialic acid (N-acetyl-neuraminic acid; Neu5Ac) from the nucleotide sugar donor CMP-Neu5Ac onto acceptor Galbeta-(1-&gt;3)-GalNAc- and Galbeta-(1-&gt;4)-GlcNAc-terminated glycoconjugates through an alpha2-3 linkage. Plays a major role in hemostasis. Responsible for sialylation of plasma VWF/von Willebrand factor, preventing its recognition by asialoglycoprotein receptors (ASGPR) and subsequent clearance. Regulates ASGPR-mediated clearance of platelets. Participates in the biosynthesis of the sialyl Lewis X epitopes, both on O- and N-glycans, which are recognized by SELE/E-selectin, SELP/P-selectin and SELL/L-selectin. Essential for selectin-mediated rolling and adhesion of leukocytes during extravasation. Contributes to adhesion and transendothelial migration of neutrophils likely through terminal sialylation of CXCR2. In glycosphingolipid biosynthesis, sialylates GM1 and GA1 gangliosides to form GD1a and GM1b, respectively. Metabolizes brain c-series ganglioside GT1c forming GQ1c. Synthesizes ganglioside LM1 (IV3Neu5Ac-nLc4Cer), a major structural component of peripheral nerve myelin. This Homo sapiens (Human) protein is CMP-N-acetylneuraminate-beta-galactosamide-alpha-2,3-sialyltransferase 4 (ST3GAL4).